The following is a 135-amino-acid chain: UPF0355 protein SAV0387 (135 aa).

The protein belongs to the UPF0355 family.

This chain is UPF0355 protein SAV0387, found in Staphylococcus aureus (strain Mu50 / ATCC 700699).